The sequence spans 284 residues: Proline-rich protein 32 (284 aa).

Disordered regions lie at residues 59-80 (RPPF…APRH), 97-119 (EINS…NMSQ), and 143-171 (SGNN…RGPP).

This Mus musculus (Mouse) protein is Proline-rich protein 32 (Prr32).